We begin with the raw amino-acid sequence, 89 residues long: Large ribosomal subunit protein bL28 (89 aa).

It belongs to the bacterial ribosomal protein bL28 family.

This chain is Large ribosomal subunit protein bL28, found in Chlamydia trachomatis serovar A (strain ATCC VR-571B / DSM 19440 / HAR-13).